We begin with the raw amino-acid sequence, 151 residues long: Superoxide dismutase [Cu-Zn] 2 (151 aa).

Cu cation-binding residues include H44, H46, and H61. A disulfide bond links C55 and C144. Positions 61, 69, 78, and 81 each coordinate Zn(2+). H118 serves as a coordination point for Cu cation.

This sequence belongs to the Cu-Zn superoxide dismutase family. As to quaternary structure, homodimer. It depends on Cu cation as a cofactor. Zn(2+) serves as cofactor.

It is found in the cytoplasm. The catalysed reaction is 2 superoxide + 2 H(+) = H2O2 + O2. Its function is as follows. Destroys radicals which are normally produced within the cells and which are toxic to biological systems. The chain is Superoxide dismutase [Cu-Zn] 2 (SODCC.1) from Zea mays (Maize).